The primary structure comprises 51 residues: Cyclic phosphodiesterase (51 aa).

His11 (proton donor/acceptor) is an active-site residue. Residue Thr13 participates in substrate binding. Residue His38 is the Proton donor/acceptor of the active site. 2 residues coordinate substrate: Ser40 and Tyr43.

It belongs to the 2H phosphoesterase superfamily. CPD1 family.

Hydrolyzes ADP-ribose 1'',2''-cyclic phosphate (Appr&gt;1) that is produced during tRNA splicing into ADP-ribose 1''-phosphate (Appr-1''p). In Triticum aestivum (Wheat), this protein is Cyclic phosphodiesterase.